Consider the following 569-residue polypeptide: Alpha-amylase (569 aa).

Residues 1–28 (MARKTVAAALALVAGAAVAVTGNAPAQA) form the signal peptide. The Ca(2+) site is built by asparagine 120, glutamine 166, and aspartate 175. The active-site Nucleophile is aspartate 205. Histidine 209 is a Ca(2+) binding site. Glutamate 232 functions as the Proton donor in the catalytic mechanism. A CBM20 domain is found at 468-569 (TTPPATSGAS…QLVLNDTFRS (102 aa)).

Belongs to the glycosyl hydrolase 13 family. Monomer. Ca(2+) is required as a cofactor.

It catalyses the reaction Endohydrolysis of (1-&gt;4)-alpha-D-glucosidic linkages in polysaccharides containing three or more (1-&gt;4)-alpha-linked D-glucose units.. This is Alpha-amylase (aml) from Streptomyces violaceus (Streptomyces venezuelae).